Consider the following 351-residue polypeptide: Dihydroorotate dehydrogenase (quinone) (351 aa).

FMN contacts are provided by residues 65–69 (AGLDK) and threonine 89. Lysine 69 serves as a coordination point for substrate. A substrate-binding site is contributed by 114–118 (NRLGF). The FMN site is built by asparagine 150 and asparagine 183. Asparagine 183 contributes to the substrate binding site. Serine 186 serves as the catalytic Nucleophile. Position 188 (asparagine 188) interacts with substrate. Residues lysine 228 and threonine 256 each contribute to the FMN site. A substrate-binding site is contributed by 257–258 (NT). Residues glycine 279, glycine 308, and 329–330 (YT) each bind FMN.

Belongs to the dihydroorotate dehydrogenase family. Type 2 subfamily. Monomer. FMN is required as a cofactor.

The protein resides in the cell membrane. It catalyses the reaction (S)-dihydroorotate + a quinone = orotate + a quinol. It functions in the pathway pyrimidine metabolism; UMP biosynthesis via de novo pathway; orotate from (S)-dihydroorotate (quinone route): step 1/1. In terms of biological role, catalyzes the conversion of dihydroorotate to orotate with quinone as electron acceptor. The polypeptide is Dihydroorotate dehydrogenase (quinone) (Acidovorax sp. (strain JS42)).